A 182-amino-acid polypeptide reads, in one-letter code: Adenine phosphoribosyltransferase (182 aa).

It belongs to the purine/pyrimidine phosphoribosyltransferase family. As to quaternary structure, homodimer.

The protein localises to the cytoplasm. The catalysed reaction is AMP + diphosphate = 5-phospho-alpha-D-ribose 1-diphosphate + adenine. Its pathway is purine metabolism; AMP biosynthesis via salvage pathway; AMP from adenine: step 1/1. Functionally, catalyzes a salvage reaction resulting in the formation of AMP, that is energically less costly than de novo synthesis. This is Adenine phosphoribosyltransferase from Stutzerimonas stutzeri (Pseudomonas stutzeri).